The following is a 740-amino-acid chain: 1,4-alpha-glucan branching enzyme GlgB (740 aa).

The active-site Nucleophile is Asp-414. Catalysis depends on Glu-467, which acts as the Proton donor.

Belongs to the glycosyl hydrolase 13 family. GlgB subfamily. In terms of assembly, monomer.

The enzyme catalyses Transfers a segment of a (1-&gt;4)-alpha-D-glucan chain to a primary hydroxy group in a similar glucan chain.. The protein operates within glycan biosynthesis; glycogen biosynthesis. In terms of biological role, catalyzes the formation of the alpha-1,6-glucosidic linkages in glycogen by scission of a 1,4-alpha-linked oligosaccharide from growing alpha-1,4-glucan chains and the subsequent attachment of the oligosaccharide to the alpha-1,6 position. The protein is 1,4-alpha-glucan branching enzyme GlgB of Rhodospirillum rubrum (strain ATCC 11170 / ATH 1.1.1 / DSM 467 / LMG 4362 / NCIMB 8255 / S1).